We begin with the raw amino-acid sequence, 48 residues long: Large ribosomal subunit protein uL14 (48 aa).

The protein belongs to the universal ribosomal protein uL14 family.

This Onchocerca volvulus protein is Large ribosomal subunit protein uL14 (RPL23).